Here is a 454-residue protein sequence, read N- to C-terminus: Chromosomal replication initiator protein DnaA (454 aa).

Residues Met-1 to Val-71 are domain I, interacts with DnaA modulators. The domain II stretch occupies residues Val-71–Ala-112. Positions Val-82 to Thr-108 are disordered. Residues Ala-84–Ala-99 are compositionally biased toward low complexity. A domain III, AAA+ region region spans residues Pro-113–Ala-334. The ATP site is built by Gly-157, Gly-159, Lys-160, and Thr-161. The domain IV, binds dsDNA stretch occupies residues Ser-335–Glu-454.

Belongs to the DnaA family. As to quaternary structure, oligomerizes as a right-handed, spiral filament on DNA at oriC.

The protein resides in the cytoplasm. In terms of biological role, plays an essential role in the initiation and regulation of chromosomal replication. ATP-DnaA binds to the origin of replication (oriC) to initiate formation of the DNA replication initiation complex once per cell cycle. Binds the DnaA box (a 9 base pair repeat at the origin) and separates the double-stranded (ds)DNA. Forms a right-handed helical filament on oriC DNA; dsDNA binds to the exterior of the filament while single-stranded (ss)DNA is stabiized in the filament's interior. The ATP-DnaA-oriC complex binds and stabilizes one strand of the AT-rich DNA unwinding element (DUE), permitting loading of DNA polymerase. After initiation quickly degrades to an ADP-DnaA complex that is not apt for DNA replication. Binds acidic phospholipids. The chain is Chromosomal replication initiator protein DnaA from Roseobacter denitrificans (strain ATCC 33942 / OCh 114) (Erythrobacter sp. (strain OCh 114)).